Reading from the N-terminus, the 190-residue chain is Iron-sulfur protein (190 aa).

Residues 8 to 36 enclose the 4Fe-4S ferredoxin-type 1 domain; it reads VIIYANPDHCLSCHSCELACAVAHSGGHD. Residues cysteine 17, cysteine 20, cysteine 23, cysteine 27, cysteine 65, cysteine 68, cysteine 73, cysteine 77, cysteine 96, cysteine 99, cysteine 102, cysteine 106, cysteine 133, cysteine 136, cysteine 150, and cysteine 154 each contribute to the [4Fe-4S] cluster site. 2 4Fe-4S ferredoxin-type domains span residues 87 to 116 and 133 to 164; these read GQVQ…VRSE and CDLC…MVDL.

Its function is as follows. The carbon monoxide dehydrogenase (CODH) oxidizes carbon monoxide coupled, via CooF, to the reduction of a hydrogen cation by a hydrogenase (probably CooH). CooF is required in stoichiometric amounts in vitro for anchoring CODH to the membrane as well as for conveying the electrons to the hydrogenase. The polypeptide is Iron-sulfur protein (cooF) (Rhodospirillum rubrum).